The following is a 463-amino-acid chain: Immune-associated nucleotide-binding protein 10 (463 aa).

In terms of domain architecture, AIG1-type G spans 3-211 (EPIKNIVLVG…YTYQLHRKIK (209 aa)). A G1 region spans residues 12 to 19 (GRTGNGKS). Residues 12–20 (GRTGNGKSS) and Ser33 contribute to the GTP site. A G2 region spans residues 39–43 (GVTMI). The tract at residues 61 to 64 (DTPG) is G3. A G4 region spans residues 131-134 (TGGD). The interval 170 to 172 (DNK) is G5. Asn171 is a GTP binding site. Residues 173 to 308 (SKDEKKKVEQ…KQLIAQANRM (136 aa)) are a coiled coil.

The protein belongs to the TRAFAC class TrmE-Era-EngA-EngB-Septin-like GTPase superfamily. AIG1/Toc34/Toc159-like paraseptin GTPase family. IAN subfamily. In terms of tissue distribution, expressed in radicles of the germinating seeds.

The sequence is that of Immune-associated nucleotide-binding protein 10 from Arabidopsis thaliana (Mouse-ear cress).